The sequence spans 1329 residues: BRCT domain-containing protein At4g02110 (1329 aa).

2 consecutive BRCT domains span residues 7-97 (LPPK…SILY) and 104-194 (NGIP…DYEI). Disordered stretches follow at residues 295 to 378 (ANKT…SMER), 393 to 470 (GEEF…TSEL), 576 to 645 (EVPE…SPTD), 745 to 827 (NDVP…ADGK), and 952 to 1077 (AKKE…KESK). 2 stretches are compositionally biased toward polar residues: residues 323-335 (SLAT…LQRS) and 363-378 (SAFN…SMER). Basic and acidic residues-rich tracts occupy residues 410–422 (VSRK…HHNS) and 600–611 (RMKDKQETELTT). A compositionally biased stretch (basic residues) spans 793–802 (GKSRVKKTKI). 2 stretches are compositionally biased toward basic and acidic residues: residues 818-827 (DGGDNSADGK) and 971-983 (DDNK…EGIV). The span at 986 to 1004 (SSLQSGKKGSSSRVEVGKS) shows a compositional bias: low complexity. The span at 1024-1047 (VMKDVGDNSAKEKENIAVDNESRK) shows a compositional bias: basic and acidic residues. The BRCT 3 domain maps to 1090–1181 (FQDQEHEPKF…KLLQEEPYEW (92 aa)).

The polypeptide is BRCT domain-containing protein At4g02110 (Arabidopsis thaliana (Mouse-ear cress)).